The primary structure comprises 405 residues: Phosphopentomutase (405 aa).

Residues aspartate 10, aspartate 303, histidine 308, aspartate 344, histidine 345, and histidine 356 each coordinate Mn(2+).

The protein belongs to the phosphopentomutase family. Requires Mn(2+) as cofactor.

The protein localises to the cytoplasm. It carries out the reaction 2-deoxy-alpha-D-ribose 1-phosphate = 2-deoxy-D-ribose 5-phosphate. The enzyme catalyses alpha-D-ribose 1-phosphate = D-ribose 5-phosphate. It functions in the pathway carbohydrate degradation; 2-deoxy-D-ribose 1-phosphate degradation; D-glyceraldehyde 3-phosphate and acetaldehyde from 2-deoxy-alpha-D-ribose 1-phosphate: step 1/2. Its function is as follows. Isomerase that catalyzes the conversion of deoxy-ribose 1-phosphate (dRib-1-P) and ribose 1-phosphate (Rib-1-P) to deoxy-ribose 5-phosphate (dRib-5-P) and ribose 5-phosphate (Rib-5-P), respectively. The chain is Phosphopentomutase from Shewanella woodyi (strain ATCC 51908 / MS32).